The primary structure comprises 541 residues: Arginine--tRNA ligase (541 aa).

Residues 119 to 129 carry the 'HIGH' region motif; that stretch reads ANPTGPLHIGH.

It belongs to the class-I aminoacyl-tRNA synthetase family. Monomer.

Its subcellular location is the cytoplasm. It carries out the reaction tRNA(Arg) + L-arginine + ATP = L-arginyl-tRNA(Arg) + AMP + diphosphate. The chain is Arginine--tRNA ligase from Helicobacter pylori (strain Shi470).